The primary structure comprises 205 residues: Enhancer of split mgamma protein (205 aa).

Residues 15 to 72 enclose the bHLH domain; sequence YRKVMKPMLERKRRARINKCLDELKDLMVATLESEGEHVTRLEKADILELTVTHLQKM. Positions 93–126 constitute an Orange domain; that stretch reads FRSGYIHAVNEVSRSLSQLPGMNVSLGTQLMTHL. The WRPW motif signature appears at 202–205; the sequence is WRPW.

As to quaternary structure, homodimer. Heterodimer with dpn. Might form higher-order oligomers. Transcription repression requires formation of a complex with a corepressor protein (Groucho). Expressed in sensory organ precursors in the wing, leg and eye imaginal disk.

Its subcellular location is the nucleus. Transcriptional repressor of genes that require a bHLH protein for their transcription. May serve as a transcriptional regulator of the Achaete-scute complex (AS-C) genes. Contributes to the neural-epidermal lineage decision during early neurogenesis. Part of the Notch signaling pathway, plays a role in neuroblasts proliferation in embryos and larvae. In the larval brain, together with other self-renewal transcriptional repressors such as klu and dpn, required for type II neuroblast self-renewal and for maintaining erm in an inactive state in intermediate neural progenitors (INP) derived from type II neuroblasts. This Drosophila melanogaster (Fruit fly) protein is Enhancer of split mgamma protein.